The primary structure comprises 647 residues: MSKIIELPEILANQIAAGEVIERPSSVVKELVENSIDAGASQITIEIEEAGLKSIQVTDNGEGIDHEDVPLALRRHATSKIKKQADLFRIRTLGFRGEAIPSIASVSRFTIETATEAGRHGTLLVAQGGEIEEHVPTSSPVGTKIKIEDLFFNTPARLKYMKSQQAELSHIVDVINRLSLAHPEVAFTLISDGREMTRTAGSGNLRQAIAGIYGLATAKKMVEISASDLDFEVSGYVSLPELTRANRNYITILINGRYIKNFLLNRAILDGYGSKLMVGRFPLAVINIQIDPYLADVNVHPTKQEVRISKERELMALISQAIATSLKEQDLIPDALENLAKSTVKRASKPEQTSLPLKENRLYYDKKQNDFFLKPQVAEQQLSFEESAKPVHEATDEKAEPQSTSVKFAERKPVSYDQLDHPELDQASLERAVDKLEQEEKSSFPELEYFGQMHGTYLFAQGKGGLYIIDQHAAQERVKYEYYREKIGDVDNSQQQLLVPYIFEFPADDMLRIKQRMELLEDAGIFLEEYGANQFILREHPIWFKEEEIEAGIYEMCDMLLLTKEVSIKKYRAELAIMMSCKRSIKANHSLDDYSARDLLFQLSQCDNPYNCPHGRPVLVNFTKSDMEKMFRRIQENHTSLRELGKY.

Residues 387-400 (SAKPVHEATDEKAE) show a composition bias toward basic and acidic residues. The interval 387–412 (SAKPVHEATDEKAEPQSTSVKFAERK) is disordered.

It belongs to the DNA mismatch repair MutL/HexB family.

Its function is as follows. This protein is involved in the repair of mismatches in DNA. It is required for dam-dependent methyl-directed DNA mismatch repair. May act as a 'molecular matchmaker', a protein that promotes the formation of a stable complex between two or more DNA-binding proteins in an ATP-dependent manner without itself being part of a final effector complex. This chain is DNA mismatch repair protein MutL, found in Streptococcus sanguinis (strain SK36).